Consider the following 494-residue polypeptide: 4-trimethylaminobutyraldehyde dehydrogenase (494 aa).

Ser-2 carries the N-acetylserine modification. Position 30 is an N6-acetyllysine; alternate (Lys-30). Lys-30 bears the N6-succinyllysine; alternate mark. Position 59 is an N6-succinyllysine (Lys-59). Residues Lys-180 and 232 to 236 each bind NAD(+); that span reads GSVPT. Glu-254 serves as the catalytic Proton acceptor. The active-site Nucleophile is Cys-288. Lys-298 carries the N6-acetyllysine modification. An NAD(+)-binding site is contributed by Glu-391.

This sequence belongs to the aldehyde dehydrogenase family. Homotetramer. In terms of tissue distribution, detected in lever (at protein level).

Its subcellular location is the cytoplasm. It localises to the cytosol. The catalysed reaction is 4-(trimethylamino)butanal + NAD(+) + H2O = 4-(trimethylamino)butanoate + NADH + 2 H(+). The enzyme catalyses an aldehyde + NAD(+) + H2O = a carboxylate + NADH + 2 H(+). It catalyses the reaction 4-aminobutanal + NAD(+) + H2O = 4-aminobutanoate + NADH + 2 H(+). It carries out the reaction formaldehyde + NAD(+) + H2O = formate + NADH + 2 H(+). The catalysed reaction is acetaldehyde + NAD(+) + H2O = acetate + NADH + 2 H(+). The enzyme catalyses imidazole-4-acetaldehyde + NAD(+) + H2O = imidazole-4-acetate + NADH + 2 H(+). It catalyses the reaction acrolein + NAD(+) + H2O = acrylate + NADH + 2 H(+). It carries out the reaction (5-hydroxyindol-3-yl)acetaldehyde + NAD(+) + H2O = (5-hydroxyindol-3-yl)acetate + NADH + 2 H(+). The catalysed reaction is 3,4-dihydroxyphenylacetaldehyde + NAD(+) + H2O = 3,4-dihydroxyphenylacetate + NADH + 2 H(+). The enzyme catalyses spermine monoaldehyde + NAD(+) + H2O = N-(2-carboxyethyl)spermidine + NADH + 2 H(+). It catalyses the reaction propanal + NAD(+) + H2O = propanoate + NADH + 2 H(+). It carries out the reaction butanal + NAD(+) + H2O = butanoate + NADH + 2 H(+). The catalysed reaction is pentanal + NAD(+) + H2O = pentanoate + NADH + 2 H(+). The enzyme catalyses hexanal + NAD(+) + H2O = hexanoate + NADH + 2 H(+). The protein operates within amine and polyamine biosynthesis; carnitine biosynthesis. Functionally, converts gamma-trimethylaminobutyraldehyde into gamma-butyrobetaine with high efficiency (in vitro). Can catalyze the irreversible oxidation of a broad range of aldehydes to the corresponding acids in an NAD-dependent reaction, but with low efficiency. Catalyzes the oxidation of aldehydes arising from biogenic amines and polyamines. The sequence is that of 4-trimethylaminobutyraldehyde dehydrogenase (Aldh9a1) from Rattus norvegicus (Rat).